Here is a 170-residue protein sequence, read N- to C-terminus: N-alpha-acetyltransferase 50 (170 aa).

The N-acetyltransferase domain occupies 6-155 (IELGDVTPHN…DAHVLQKNLK (150 aa)). Substrate is bound at residue Tyr-31. The active site involves Tyr-73. Met-75 provides a ligand contact to substrate. Acetyl-CoA is bound at residue 77-90 (LGCLAPYRRLGIGT). Residue 79–90 (CLAPYRRLGIGT) participates in CoA binding. The active site involves His-112. Position 117–126 (117–126 (NESAIDFYRK)) interacts with CoA. The tract at residues 138–141 (YYKR) is substrate.

Belongs to the acetyltransferase family. GNAT subfamily.

The protein localises to the cytoplasm. Its subcellular location is the nucleus. It carries out the reaction N-terminal L-methionyl-L-alanyl-[protein] + acetyl-CoA = N-terminal N(alpha)-acetyl-L-methionyl-L-alanyl-[protein] + CoA + H(+). The catalysed reaction is N-terminal L-methionyl-L-seryl-[protein] + acetyl-CoA = N-terminal N(alpha)-acetyl-L-methionyl-L-seryl-[protein] + CoA + H(+). It catalyses the reaction N-terminal L-methionyl-L-valyl-[protein] + acetyl-CoA = N-terminal N(alpha)-acetyl-L-methionyl-L-valyl-[protein] + CoA + H(+). The enzyme catalyses N-terminal L-methionyl-L-threonyl-[protein] + acetyl-CoA = N-terminal N(alpha)-acetyl-L-methionyl-L-threonyl-[protein] + CoA + H(+). It carries out the reaction N-terminal L-methionyl-L-lysyl-[protein] + acetyl-CoA = N-terminal N(alpha)-acetyl-L-methionyl-L-lysyl-[protein] + CoA + H(+). The catalysed reaction is N-terminal L-methionyl-L-leucyl-[protein] + acetyl-CoA = N-terminal N(alpha)-acetyl-L-methionyl-L-leucyl-[protein] + CoA + H(+). It catalyses the reaction N-terminal L-methionyl-L-phenylalanyl-[protein] + acetyl-CoA = N-terminal N(alpha)-acetyl-L-methionyl-L-phenylalanyl-[protein] + CoA + H(+). The enzyme catalyses N-terminal L-methionyl-L-tyrosyl-[protein] + acetyl-CoA = N-terminal N(alpha)-acetyl-L-methionyl-L-tyrosyl-[protein] + CoA + H(+). Its function is as follows. N-alpha-acetyltransferase that acetylates the N-terminus of proteins that retain their initiating methionine. Has a broad substrate specificity: able to acetylate the initiator methionine of most peptides, except for those with a proline in second position. Also displays N-epsilon-acetyltransferase activity by mediating acetylation of the side chain of specific lysines on proteins. The relevance of N-epsilon-acetyltransferase activity is however unclear. Required for sister chromatid cohesion during mitosis by promoting binding of CDCA5/sororin to cohesin. This chain is N-alpha-acetyltransferase 50 (naa50), found in Xenopus laevis (African clawed frog).